A 258-amino-acid polypeptide reads, in one-letter code: Imidazole glycerol phosphate synthase subunit HisF (258 aa).

Residues D11 and D130 contribute to the active site.

This sequence belongs to the HisA/HisF family. Heterodimer of HisH and HisF.

It is found in the cytoplasm. The enzyme catalyses 5-[(5-phospho-1-deoxy-D-ribulos-1-ylimino)methylamino]-1-(5-phospho-beta-D-ribosyl)imidazole-4-carboxamide + L-glutamine = D-erythro-1-(imidazol-4-yl)glycerol 3-phosphate + 5-amino-1-(5-phospho-beta-D-ribosyl)imidazole-4-carboxamide + L-glutamate + H(+). It participates in amino-acid biosynthesis; L-histidine biosynthesis; L-histidine from 5-phospho-alpha-D-ribose 1-diphosphate: step 5/9. IGPS catalyzes the conversion of PRFAR and glutamine to IGP, AICAR and glutamate. The HisF subunit catalyzes the cyclization activity that produces IGP and AICAR from PRFAR using the ammonia provided by the HisH subunit. The protein is Imidazole glycerol phosphate synthase subunit HisF of Synechococcus sp. (strain CC9902).